A 455-amino-acid chain; its full sequence is Probable glycine dehydrogenase (decarboxylating) subunit 1 (455 aa).

This sequence belongs to the GcvP family. N-terminal subunit subfamily. As to quaternary structure, the glycine cleavage system is composed of four proteins: P, T, L and H. In this organism, the P 'protein' is a heterodimer of two subunits.

The enzyme catalyses N(6)-[(R)-lipoyl]-L-lysyl-[glycine-cleavage complex H protein] + glycine + H(+) = N(6)-[(R)-S(8)-aminomethyldihydrolipoyl]-L-lysyl-[glycine-cleavage complex H protein] + CO2. In terms of biological role, the glycine cleavage system catalyzes the degradation of glycine. The P protein binds the alpha-amino group of glycine through its pyridoxal phosphate cofactor; CO(2) is released and the remaining methylamine moiety is then transferred to the lipoamide cofactor of the H protein. This chain is Probable glycine dehydrogenase (decarboxylating) subunit 1, found in Francisella tularensis subsp. mediasiatica (strain FSC147).